Reading from the N-terminus, the 157-residue chain is 6,7-dimethyl-8-ribityllumazine synthase (157 aa).

Residues F22, 57–59, and 81–83 each bind 5-amino-6-(D-ribitylamino)uracil; these read AYE and TVI. Position 86–87 (86–87) interacts with (2S)-2-hydroxy-3-oxobutyl phosphate; the sequence is GT. H89 serves as the catalytic Proton donor. F114 is a 5-amino-6-(D-ribitylamino)uracil binding site. Residue R128 coordinates (2S)-2-hydroxy-3-oxobutyl phosphate.

Belongs to the DMRL synthase family. As to quaternary structure, forms an icosahedral capsid composed of 60 subunits, arranged as a dodecamer of pentamers.

It carries out the reaction (2S)-2-hydroxy-3-oxobutyl phosphate + 5-amino-6-(D-ribitylamino)uracil = 6,7-dimethyl-8-(1-D-ribityl)lumazine + phosphate + 2 H2O + H(+). It functions in the pathway cofactor biosynthesis; riboflavin biosynthesis; riboflavin from 2-hydroxy-3-oxobutyl phosphate and 5-amino-6-(D-ribitylamino)uracil: step 1/2. In terms of biological role, catalyzes the formation of 6,7-dimethyl-8-ribityllumazine by condensation of 5-amino-6-(D-ribitylamino)uracil with 3,4-dihydroxy-2-butanone 4-phosphate. This is the penultimate step in the biosynthesis of riboflavin. This Haemophilus influenzae (strain ATCC 51907 / DSM 11121 / KW20 / Rd) protein is 6,7-dimethyl-8-ribityllumazine synthase.